The following is a 183-amino-acid chain: Dual-action ribosomal maturation protein DarP (183 aa).

The disordered stretch occupies residues 1-27 (MSSHSQEPVGEENFDDSEYDRPNKSQV). Residues 9–18 (VGEENFDDSE) are compositionally biased toward acidic residues.

This sequence belongs to the DarP family.

It is found in the cytoplasm. Functionally, member of a network of 50S ribosomal subunit biogenesis factors which assembles along the 30S-50S interface, preventing incorrect 23S rRNA structures from forming. Promotes peptidyl transferase center (PTC) maturation. This chain is Dual-action ribosomal maturation protein DarP, found in Bordetella pertussis (strain Tohama I / ATCC BAA-589 / NCTC 13251).